Reading from the N-terminus, the 480-residue chain is Cysteine--tRNA ligase (480 aa).

Cys29 is a Zn(2+) binding site. The short motif at 31–41 is the 'HIGH' region element; that stretch reads ITVYDYCHLGH. The Zn(2+) site is built by Cys215, His240, and Glu244. The 'KMSKS' region signature appears at 272–276; it reads KMSKS. Lys275 serves as a coordination point for ATP.

Belongs to the class-I aminoacyl-tRNA synthetase family. Monomer. The cofactor is Zn(2+).

The protein resides in the cytoplasm. It catalyses the reaction tRNA(Cys) + L-cysteine + ATP = L-cysteinyl-tRNA(Cys) + AMP + diphosphate. The polypeptide is Cysteine--tRNA ligase (Microcystis aeruginosa (strain NIES-843 / IAM M-2473)).